Consider the following 423-residue polypeptide: Deferrochelatase (423 aa).

The segment at residues 1–35 (MQYEDENGVNEPSRRRLLKGIGALALAGSCPVAHA) is a signal peptide (tat-type signal). Residues 236 to 238 (GTA), His-329, 334 to 336 (NPR), and Arg-347 contribute to the heme b site.

It belongs to the DyP-type peroxidase family. EfeB subfamily. Homodimer. Part of a ferrous iron transporter composed of EfeU, EfeO and EfeB. The cofactor is heme b. Predicted to be exported by the Tat system. The position of the signal peptide cleavage has not been experimentally proven.

The protein resides in the periplasm. The catalysed reaction is heme b + 2 H(+) = protoporphyrin IX + Fe(2+). Functionally, involved in the recovery of exogenous heme iron. Extracts iron from heme while preserving the protoporphyrin ring intact. In Escherichia coli O6:K15:H31 (strain 536 / UPEC), this protein is Deferrochelatase (efeB).